The primary structure comprises 357 residues: 3-dehydroquinate synthase (357 aa).

Residues glycine 104–aspartate 108, threonine 128–threonine 129, lysine 141, and phenylalanine 168–threonine 171 each bind NAD(+). 3 residues coordinate Zn(2+): glutamate 183, histidine 243, and histidine 260.

The protein belongs to the sugar phosphate cyclases superfamily. Dehydroquinate synthase family. Co(2+) serves as cofactor. The cofactor is Zn(2+). It depends on NAD(+) as a cofactor.

It localises to the cytoplasm. It catalyses the reaction 7-phospho-2-dehydro-3-deoxy-D-arabino-heptonate = 3-dehydroquinate + phosphate. Its pathway is metabolic intermediate biosynthesis; chorismate biosynthesis; chorismate from D-erythrose 4-phosphate and phosphoenolpyruvate: step 2/7. Catalyzes the conversion of 3-deoxy-D-arabino-heptulosonate 7-phosphate (DAHP) to dehydroquinate (DHQ). The protein is 3-dehydroquinate synthase of Streptococcus pyogenes serotype M5 (strain Manfredo).